The following is a 907-amino-acid chain: Protein translocase subunit SecA (907 aa).

ATP-binding positions include Gln-86, 104–108 (GEGKT), and Asp-511. Composition is skewed to basic and acidic residues over residues 838 to 856 (AQEEWKESMSEIKAEHESV) and 869 to 888 (EEAPKVQQVKREGPKIKRND). Residues 838–907 (AQEEWKESMS…YKQCHGKVVD (70 aa)) form a disordered region. Residues Cys-890, Cys-892, Cys-901, and His-902 each contribute to the Zn(2+) site. The segment covering 896–907 (KKYKQCHGKVVD) has biased composition (basic residues).

It belongs to the SecA family. Monomer and homodimer. Part of the essential Sec protein translocation apparatus which comprises SecA, SecYEG and auxiliary proteins SecDF-YajC and YidC. Zn(2+) is required as a cofactor.

The protein localises to the cell inner membrane. It is found in the cytoplasm. It carries out the reaction ATP + H2O + cellular proteinSide 1 = ADP + phosphate + cellular proteinSide 2.. Functionally, part of the Sec protein translocase complex. Interacts with the SecYEG preprotein conducting channel. Has a central role in coupling the hydrolysis of ATP to the transfer of proteins into and across the cell membrane, serving both as a receptor for the preprotein-SecB complex and as an ATP-driven molecular motor driving the stepwise translocation of polypeptide chains across the membrane. This chain is Protein translocase subunit SecA, found in Francisella philomiragia subsp. philomiragia (strain ATCC 25017 / CCUG 19701 / FSC 153 / O#319-036).